An 840-amino-acid polypeptide reads, in one-letter code: DNA mismatch repair protein MutS (840 aa).

Residue 601–608 (GPNMSGKS) participates in ATP binding.

It belongs to the DNA mismatch repair MutS family.

Its function is as follows. This protein is involved in the repair of mismatches in DNA. It is possible that it carries out the mismatch recognition step. This protein has a weak ATPase activity. This is DNA mismatch repair protein MutS from Lactococcus lactis subsp. cremoris (strain MG1363).